We begin with the raw amino-acid sequence, 431 residues long: MIERYSREEMSNIWTDQNRYEAWLEVEILACEAWSELGHIPKADVQKIRQNAKVNVERAQEIEQETRHDVVAFTRQVSETLGEERKWVHYGLTSTDVVDTALSFVIKQANDIIEKDLERFIDVLAEKAKNYKYTLMMGRTHGVHAEPTTFGVKMALWYTEMQRNLQRFKQVREEIEVGKMSGAVGTFANIPPEIESYVCKHLGIGTAPVSTQTLQRDRHAYYIATLALIATSLEKFAVEIRNLQKTETREVEEAFAKGQKGSSAMPHKRNPIGSENITGISRVIRGYITTAYENVPLWHERDISHSSAERIMLPDVTIALDYALNRFTNIVDRLTVFEDNMRNNIDKTFGLIFSQRVLLALINKGMVREEAYDKVQPKAMISWETKTPFRELIEQDESITSVLTKEELDECFDPKHHLNQVDTIFERAGLA.

Residues 4–5 (RY), 67–69 (RHD), and 93–94 (TS) each bind N(6)-(1,2-dicarboxyethyl)-AMP. Residue His-141 is the Proton donor/acceptor of the active site. Residue Gln-212 coordinates N(6)-(1,2-dicarboxyethyl)-AMP. Catalysis depends on Ser-262, which acts as the Proton donor/acceptor. Residues Ser-263, 268–270 (KRN), Asn-276, and 307–311 (SAERI) contribute to the N(6)-(1,2-dicarboxyethyl)-AMP site.

The protein belongs to the lyase 1 family. Adenylosuccinate lyase subfamily. In terms of assembly, homodimer and homotetramer. Residues from neighboring subunits contribute catalytic and substrate-binding residues to each active site.

It catalyses the reaction N(6)-(1,2-dicarboxyethyl)-AMP = fumarate + AMP. The catalysed reaction is (2S)-2-[5-amino-1-(5-phospho-beta-D-ribosyl)imidazole-4-carboxamido]succinate = 5-amino-1-(5-phospho-beta-D-ribosyl)imidazole-4-carboxamide + fumarate. The protein operates within purine metabolism; AMP biosynthesis via de novo pathway; AMP from IMP: step 2/2. It functions in the pathway purine metabolism; IMP biosynthesis via de novo pathway; 5-amino-1-(5-phospho-D-ribosyl)imidazole-4-carboxamide from 5-amino-1-(5-phospho-D-ribosyl)imidazole-4-carboxylate: step 2/2. Functionally, catalyzes two reactions in de novo purine nucleotide biosynthesis. Catalyzes the breakdown of 5-aminoimidazole- (N-succinylocarboxamide) ribotide (SAICAR or 2-[5-amino-1-(5-phospho-beta-D-ribosyl)imidazole-4-carboxamido]succinate) to 5-aminoimidazole-4-carboxamide ribotide (AICAR or 5-amino-1-(5-phospho-beta-D-ribosyl)imidazole-4-carboxamide) and fumarate, and of adenylosuccinate (ADS or N(6)-(1,2-dicarboxyethyl)-AMP) to adenosine monophosphate (AMP) and fumarate. The sequence is that of Adenylosuccinate lyase (purB) from Staphylococcus aureus (strain USA300).